The chain runs to 763 residues: MAATGTAAAAATGRLLLLLLVGLTAPALALAGYIEALAANAGTGFAVAEPQIAMFCGKLNMHVNIQTGKWEPDPTGTKSCFETKEEVLQYCQEMYPELQITNVMEANQRVSIDNWCRRDKKQCKSRFVTPFKCLVGEFVSDVLLVPEKCQFFHKERMEVCENHQHWHTVVKEACLTQGMTLYSYGMLLPCGVDQFHGTEYVCCPQTKIIGSVSKEEEEEDEEEEEEEDEEEDYDVYKSEFPTEADLEDFTEAAVDEDDEDEEEGEEVVEDRDYYYDTFKGDDYNEENPTEPGSDGTMSDKEITHDVKAVCSQEAMTGPCRAVMPRWYFDLSKGKCVRFIYGGCGGNRNNFESEDYCMAVCKAMIPPTPLPTNDVDVYFETSADDNEHARFQKAKEQLEIRHRNRMDRVKKEWEEAELQAKNLPKAERQTLIQHFQAMVKALEKEAASEKQQLVETHLARVEAMLNDRRRMALENYLAALQSDPPRPHRILQALRRYVRAENKDRLHTIRHYQHVLAVDPEKAAQMKSQVMTHLHVIEERRNQSLSLLYKVPYVAQEIQEEIDELLQEQRADMDQFTASISETPVDVRVSSEESEEIPPFHPFHPFPALPENEDTQPELYHPMKKGSGVGEQDGGLIGAEEKVINSKNKVDENMVIDETLDVKEMIFNAERVGGLEEERESVGPLREDFSLSSSALIGLLVIAVAIATVIVISLVMLRKRQYGTISHGIVEVDPMLTPEERHLNKMQNHGYENPTYKYLEQMQI.

The first 31 residues, 1–31, serve as a signal peptide directing secretion; that stretch reads MAATGTAAAAATGRLLLLLLVGLTAPALALA. Topologically, residues 32–692 are extracellular; sequence GYIEALAANA…PLREDFSLSS (661 aa). Residues 46-139 form a GFLD subdomain region; sequence AVAEPQIAMF…PFKCLVGEFV (94 aa). Residues 46–205 enclose the E1 domain; it reads AVAEPQIAMF…HGTEYVCCPQ (160 aa). Intrachain disulfides connect Cys-56/Cys-80, Cys-91/Cys-133, Cys-116/Cys-123, Cys-149/Cys-203, Cys-160/Cys-190, and Cys-174/Cys-202. The cuBD subdomain stretch occupies residues 147 to 205; sequence EKCQFFHKERMEVCENHQHWHTVVKEACLTQGMTLYSYGMLLPCGVDQFHGTEYVCCPQ. Cu cation-binding residues include His-163, His-167, and Tyr-184. The tract at residues 211 to 299 is disordered; it reads SVSKEEEEED…EPGSDGTMSD (89 aa). 2 stretches are compositionally biased toward acidic residues: residues 215-233 and 242-269; these read EEEEEDEEEEEEEDEEEDY and TEADLEDFTEAAVDEDDEDEEEGEEVVE. Residues 270-282 show a composition bias toward basic and acidic residues; the sequence is DRDYYYDTFKGDD. Residues 306 to 364 enclose the BPTI/Kunitz inhibitor domain; the sequence is VKAVCSQEAMTGPCRAVMPRWYFDLSKGKCVRFIYGGCGGNRNNFESEDYCMAVCKAMI. Intrachain disulfides connect Cys-310–Cys-360, Cys-319–Cys-343, and Cys-335–Cys-356. Residues 373–564 form the E2 domain; that stretch reads DVDVYFETSA…QEIQEEIDEL (192 aa). Ser-590 is subject to Phosphoserine; by FAM20C. Ser-626 carries O-linked (Xyl...) (chondroitin sulfate) serine glycosylation. Residues 693–716 form a helical membrane-spanning segment; that stretch reads SALIGLLVIAVAIATVIVISLVML. At 717–763 the chain is on the cytoplasmic side; that stretch reads RKRQYGTISHGIVEVDPMLTPEERHLNKMQNHGYENPTYKYLEQMQI. The tract at residues 749 to 763 is interaction with DAB2; sequence GYENPTYKYLEQMQI. Residues 750-755 carry the NPXY motif motif; it reads YENPTY.

Belongs to the APP family. In terms of assembly, interacts with CPEB1. Interacts (via NPXY motif) with DAB2 (via PID domain); the interaction is impaired by tyrosine phosphorylation of the NPXY motif. Interacts (via cytoplasmic domain) with APBB2/FE65L. Interacts (via intracellular domain) with APBB3/FE65L2. In terms of processing, the BPTI/Kunitz inhibitor domain is O-glycosylated. As to expression, expressed in placenta, brain, heart, lung, liver, kidney and endothelial tissues.

The protein resides in the cell membrane. The protein localises to the nucleus. Functionally, may play a role in the regulation of hemostasis. The soluble form may have inhibitory properties towards coagulation factors. May interact with cellular G-protein signaling pathways. May bind to the DNA 5'-GTCACATG-3'(CDEI box). Inhibits trypsin, chymotrypsin, plasmin, factor XIA and plasma and glandular kallikrein. Modulates the Cu/Zn nitric oxide-catalyzed autodegradation of GPC1 heparan sulfate side chains in fibroblasts. In Homo sapiens (Human), this protein is Amyloid beta precursor like protein 2.